A 113-amino-acid polypeptide reads, in one-letter code: Ranasmurfin (113 aa).

Residue Y2 is modified to 2',4',5'-topaquinone. The lysine tyrosylquinone (Tyr-Lys) cross-link spans 2–31; the sequence is YACSFPPSEIPGSKECLAEALQKHQGFKKK. 3 disulfides stabilise this stretch: C4-C62, C17-C65, and C37-C101. At S9 the chain carries Aminomalonic acid (Ser); in chain B. Residues 17–65 constitute a cross-link (S-cysteinyl 3-(oxidosulfanyl)alanine (Cys-Cys); in chain B); that stretch reads CLAEALQKHQGFKKKSYALICAYLNYKEDAENYERAAEDFDSAVKCTGC. Residues 30 to 108 constitute a cross-link (lysine tyrosylquinone (Lys-Tyr)); the sequence is KKSYALICAY…SLCTLFQKLY (79 aa). C65 is modified (cysteine sulfenic acid (-SOH); in chain B). 2',4',5'-topaquinone is present on Y108. Residues Y108 and H112 each coordinate Zn(2+). Y108 is covalently cross-linked (5'-tyrosyl-5'-aminotyrosine (Tyr-Tyr) (interchain with Y-108)).

As to quaternary structure, homodimer. The two chains, designated A and B, differ in their modifications, but not, it is thought, in their sequence. Requires Zn(2+) as cofactor. Foam nest.

The protein localises to the secreted. The chain is Ranasmurfin from Polypedates leucomystax (Common tree frog).